The chain runs to 863 residues: Envelope glycoprotein gp160 (863 aa).

The first 31 residues, 1-31 (MRVMGIRMNYQHLWKWGIMLLGILMTCSVAE), serve as a signal peptide directing secretion. Residues 32–691 (DLWVTVYYGV…ITKWLWYIKI (660 aa)) are Extracellular-facing. An intrachain disulfide couples C53 to C73. N-linked (GlcNAc...) asparagine; by host glycans are attached at residues N87, N129, N136, N142, N143, N159, N163, N194, N199, N209, N246, N274, N288, N301, and N307. 5 disulfides stabilise this stretch: C118-C217, C125-C208, C130-C160, C230-C259, and C240-C251. The tract at residues 130–159 (CTNAGGNKTTNGNNTTNQEEQMMEKGEMKN) is V1. A V2 region spans residues 160–208 (CSFNITTVISDKKKQVHALFYRLDVVPIDDDNSANTSNTNYTNYRLINC). The tract at residues 308-341 (CTRPDNKITRQSTPIGLGQALYTTRIKGDIRQAY) is V3. C308 and C342 are joined by a disulfide. N343, N350, and N365 each carry an N-linked (GlcNAc...) asparagine; by host glycan. Positions 374–384 (PAGGDPEITTH) are CD4-binding loop. Disulfide bonds link C388–C452 and C395–C425. The interval 395-425 (CNTSRLFNSTWNSSTWNNDTLNSEGTIKLPC) is V4. N-linked (GlcNAc...) asparagine; by host glycans are attached at residues N396, N402, N406, N412, N455, N468, N469, and N472. 2 V5 regions span residues 467–478 (VNNSTNETFRPG) and 470–478 (STNETFRPG). A fusion peptide region spans residues 519-539 (AIGLGAVFLGFLGAAGSTMGA). The interval 581–599 (KQLQARVLAVESYLKDQQL) is immunosuppression. A disulfide bridge connects residues C605 and C611. 4 N-linked (GlcNAc...) asparagine; by host glycosylation sites follow: N618, N623, N632, and N644. The stretch at 640–674 (REIDNYTGVIYSLIENSQIQQEKNEQDLLQLDKWA) forms a coiled coil. Residues 669-690 (QLDKWASLWNWFSITKWLWYIK) are MPER; binding to GalCer. A helical transmembrane segment spans residues 692-712 (FIMIVGGLIGLRIVFTVLSLV). Residues 713–863 (NRVRQGYSPL…VRQGLERALL (151 aa)) lie on the Cytoplasmic side of the membrane. The YXXL motif; contains endocytosis signal signature appears at 719-722 (YSPL). The segment at 729–748 (PAPRGPDRPEGIEEEGGEQG) is disordered. A lipid anchor (S-palmitoyl cysteine; by host) is attached at C771. The short motif at 862–863 (LL) is the Di-leucine internalization motif element.

Belongs to the HIV-1 env protein family. As to quaternary structure, the mature envelope protein (Env) consists of a homotrimer of non-covalently associated gp120-gp41 heterodimers. The resulting complex protrudes from the virus surface as a spike. There seems to be as few as 10 spikes on the average virion. Interacts with host CD4, CCR5 and CXCR4. Gp120 also interacts with the C-type lectins CD209/DC-SIGN and CLEC4M/DC-SIGNR (collectively referred to as DC-SIGN(R)). Gp120 and gp41 interact with GalCer. Gp120 interacts with host ITGA4/ITGB7 complex; on CD4+ T-cells, this interaction results in rapid activation of integrin ITGAL/LFA-1, which facilitates efficient cell-to-cell spreading of HIV-1. Gp120 interacts with cell-associated heparan sulfate; this interaction increases virus infectivity on permissive cells and may be involved in infection of CD4- cells. In terms of assembly, the mature envelope protein (Env) consists of a homotrimer of non-covalently associated gp120-gp41 heterodimers. The resulting complex protrudes from the virus surface as a spike. There seems to be as few as 10 spikes on the average virion. Post-translationally, highly glycosylated by host. The high number of glycan on the protein is reffered to as 'glycan shield' because it contributes to hide protein sequence from adaptive immune system. Palmitoylation of the transmembrane protein and of Env polyprotein (prior to its proteolytic cleavage) is essential for their association with host cell membrane lipid rafts. Palmitoylation is therefore required for envelope trafficking to classical lipid rafts, but not for viral replication. In terms of processing, specific enzymatic cleavages in vivo yield mature proteins. Envelope glycoproteins are synthesized as an inactive precursor that is heavily N-glycosylated and processed likely by host cell furin in the Golgi to yield the mature SU and TM proteins. The cleavage site between SU and TM requires the minimal sequence [KR]-X-[KR]-R. About 2 of the 9 disulfide bonds of gp41 are reduced by P4HB/PDI, following binding to CD4 receptor.

It localises to the virion membrane. The protein resides in the host cell membrane. The protein localises to the host endosome membrane. Its function is as follows. Oligomerizes in the host endoplasmic reticulum into predominantly trimers. In a second time, gp160 transits in the host Golgi, where glycosylation is completed. The precursor is then proteolytically cleaved in the trans-Golgi and thereby activated by cellular furin or furin-like proteases to produce gp120 and gp41. In terms of biological role, attaches the virus to the host lymphoid cell by binding to the primary receptor CD4. This interaction induces a structural rearrangement creating a high affinity binding site for a chemokine coreceptor like CXCR4 and/or CCR5. Acts as a ligand for CD209/DC-SIGN and CLEC4M/DC-SIGNR, which are respectively found on dendritic cells (DCs), and on endothelial cells of liver sinusoids and lymph node sinuses. These interactions allow capture of viral particles at mucosal surfaces by these cells and subsequent transmission to permissive cells. HIV subverts the migration properties of dendritic cells to gain access to CD4+ T-cells in lymph nodes. Virus transmission to permissive T-cells occurs either in trans (without DCs infection, through viral capture and transmission), or in cis (following DCs productive infection, through the usual CD4-gp120 interaction), thereby inducing a robust infection. In trans infection, bound virions remain infectious over days and it is proposed that they are not degraded, but protected in non-lysosomal acidic organelles within the DCs close to the cell membrane thus contributing to the viral infectious potential during DCs' migration from the periphery to the lymphoid tissues. On arrival at lymphoid tissues, intact virions recycle back to DCs' cell surface allowing virus transmission to CD4+ T-cells. Functionally, acts as a class I viral fusion protein. Under the current model, the protein has at least 3 conformational states: pre-fusion native state, pre-hairpin intermediate state, and post-fusion hairpin state. During fusion of viral and target intracellular membranes, the coiled coil regions (heptad repeats) assume a trimer-of-hairpins structure, positioning the fusion peptide in close proximity to the C-terminal region of the ectodomain. The formation of this structure appears to drive apposition and subsequent fusion of viral and target cell membranes. Complete fusion occurs in host cell endosomes and is dynamin-dependent, however some lipid transfer might occur at the plasma membrane. The virus undergoes clathrin-dependent internalization long before endosomal fusion, thus minimizing the surface exposure of conserved viral epitopes during fusion and reducing the efficacy of inhibitors targeting these epitopes. Membranes fusion leads to delivery of the nucleocapsid into the cytoplasm. This Human immunodeficiency virus type 1 group M subtype D (isolate Z84) (HIV-1) protein is Envelope glycoprotein gp160.